Consider the following 348-residue polypeptide: Holliday junction branch migration complex subunit RuvB (348 aa).

Residues 4–186 are large ATPase domain (RuvB-L); that stretch reads TDRIISANTA…FGIIQRLEFY (183 aa). Residues Ile25, Arg26, Gly67, Lys70, Thr71, Thr72, 133–135, Arg176, Tyr186, and Arg223 contribute to the ATP site; that span reads EDY. Thr71 is a binding site for Mg(2+). The tract at residues 187 to 257 is small ATPAse domain (RuvB-S); that stretch reads SIDDLSKIVY…IADKALSMLK (71 aa). Residues 260-348 are head domain (RuvB-H); the sequence is PVGFDHMDHR…SADQQQTLSI (89 aa). 2 residues coordinate DNA: Arg315 and Arg320.

Belongs to the RuvB family. In terms of assembly, homohexamer. Forms an RuvA(8)-RuvB(12)-Holliday junction (HJ) complex. HJ DNA is sandwiched between 2 RuvA tetramers; dsDNA enters through RuvA and exits via RuvB. An RuvB hexamer assembles on each DNA strand where it exits the tetramer. Each RuvB hexamer is contacted by two RuvA subunits (via domain III) on 2 adjacent RuvB subunits; this complex drives branch migration. In the full resolvosome a probable DNA-RuvA(4)-RuvB(12)-RuvC(2) complex forms which resolves the HJ.

The protein resides in the cytoplasm. The catalysed reaction is ATP + H2O = ADP + phosphate + H(+). The RuvA-RuvB-RuvC complex processes Holliday junction (HJ) DNA during genetic recombination and DNA repair, while the RuvA-RuvB complex plays an important role in the rescue of blocked DNA replication forks via replication fork reversal (RFR). RuvA specifically binds to HJ cruciform DNA, conferring on it an open structure. The RuvB hexamer acts as an ATP-dependent pump, pulling dsDNA into and through the RuvAB complex. RuvB forms 2 homohexamers on either side of HJ DNA bound by 1 or 2 RuvA tetramers; 4 subunits per hexamer contact DNA at a time. Coordinated motions by a converter formed by DNA-disengaged RuvB subunits stimulates ATP hydrolysis and nucleotide exchange. Immobilization of the converter enables RuvB to convert the ATP-contained energy into a lever motion, pulling 2 nucleotides of DNA out of the RuvA tetramer per ATP hydrolyzed, thus driving DNA branch migration. The RuvB motors rotate together with the DNA substrate, which together with the progressing nucleotide cycle form the mechanistic basis for DNA recombination by continuous HJ branch migration. Branch migration allows RuvC to scan DNA until it finds its consensus sequence, where it cleaves and resolves cruciform DNA. The protein is Holliday junction branch migration complex subunit RuvB of Francisella tularensis subsp. tularensis (strain FSC 198).